A 245-amino-acid chain; its full sequence is Small ribosomal subunit protein uS2 (245 aa).

It belongs to the universal ribosomal protein uS2 family.

The polypeptide is Small ribosomal subunit protein uS2 (Dehalococcoides mccartyi (strain CBDB1)).